The chain runs to 505 residues: Flagellin (505 aa).

This sequence belongs to the bacterial flagellin family.

It localises to the secreted. Its subcellular location is the bacterial flagellum. Its function is as follows. Flagellin is the subunit protein which polymerizes to form the filaments of bacterial flagella. In Salmonella montevideo, this protein is Flagellin (fliC).